We begin with the raw amino-acid sequence, 415 residues long: Serine hydroxymethyltransferase (415 aa).

The segment covering 1–10 (MERSHIRDVD) has biased composition (basic and acidic residues). A disordered region spans residues 1–21 (MERSHIRDVDPDAADALSSER). Residues Leu119 and 123 to 125 (GHL) contribute to the (6S)-5,6,7,8-tetrahydrofolate site. Lys228 bears the N6-(pyridoxal phosphate)lysine mark. 353–355 (SAF) is a (6S)-5,6,7,8-tetrahydrofolate binding site.

The protein belongs to the SHMT family. As to quaternary structure, homodimer. Pyridoxal 5'-phosphate serves as cofactor.

The protein localises to the cytoplasm. The catalysed reaction is (6R)-5,10-methylene-5,6,7,8-tetrahydrofolate + glycine + H2O = (6S)-5,6,7,8-tetrahydrofolate + L-serine. It functions in the pathway one-carbon metabolism; tetrahydrofolate interconversion. Its pathway is amino-acid biosynthesis; glycine biosynthesis; glycine from L-serine: step 1/1. Catalyzes the reversible interconversion of serine and glycine with tetrahydrofolate (THF) serving as the one-carbon carrier. Also exhibits THF-independent aldolase activity toward beta-hydroxyamino acids, producing glycine and aldehydes, via a retro-aldol mechanism. The protein is Serine hydroxymethyltransferase of Haloquadratum walsbyi (strain DSM 16790 / HBSQ001).